The chain runs to 85 residues: RNA-binding protein Hfq (85 aa).

The Sm domain occupies 10–70 (DAFLNQVRKE…ISTIIPQRPV (61 aa)).

It belongs to the Hfq family. In terms of assembly, homohexamer.

Functionally, RNA chaperone that binds small regulatory RNA (sRNAs) and mRNAs to facilitate mRNA translational regulation in response to envelope stress, environmental stress and changes in metabolite concentrations. Also binds with high specificity to tRNAs. This is RNA-binding protein Hfq from Carboxydothermus hydrogenoformans (strain ATCC BAA-161 / DSM 6008 / Z-2901).